The chain runs to 224 residues: Phosphoribosyltransferase domain-containing protein 1 (224 aa).

The Mg(2+) site is built by Glu140 and Asp141. Residues 140 to 148, Lys172, 193 to 194, and Asp200 contribute to the GMP site; these read EDIINTGRT and FV. Asp200 contacts Mg(2+).

It belongs to the purine/pyrimidine phosphoribosyltransferase family.

In Xenopus laevis (African clawed frog), this protein is Phosphoribosyltransferase domain-containing protein 1 (prtfdc1).